We begin with the raw amino-acid sequence, 136 residues long: Nanos homolog 2 (136 aa).

The interval 27–51 is disordered; the sequence is KQRQEGEVAEEPNSRPQEKSEQDLE. The segment covering 28 to 48 has biased composition (basic and acidic residues); it reads QRQEGEVAEEPNSRPQEKSEQ. The Nanos-type zinc finger occupies 60–114; it reads ICNFCKHNGESRHVYTSHQLKTPEGVVVCPILRHYVCPLCGATGDQAHTLKYCPL. Residues cysteine 61, cysteine 64, histidine 77, cysteine 88, cysteine 96, cysteine 99, histidine 107, and cysteine 112 each contribute to the Zn(2+) site. 2 short sequence motifs (C2HC) span residues 61 to 88 and 96 to 112; these read CNFC…VVVC and CPLC…LKYC.

It belongs to the nanos family. Interacts with CNOT1, CNOT3, CNOT6L, CNOT7 and CNOT9. As to expression, predominantly expressed in male germ cells. Expressed in self-renewing spermatogonial stem cells and developing gonads.

It localises to the cytoplasm. Its subcellular location is the P-body. The protein localises to the perinuclear region. Its function is as follows. Plays a key role in the sexual differentiation of germ cells by promoting the male fate but suppressing the female fate. Represses the female fate pathways by suppressing meiosis, which in turn results in the promotion of the male fate. Maintains the suppression of meiosis by preventing STRA8 expression, which is required for premeiotic DNA replication, after CYP26B1 is decreased. Regulates the localization of the CCR4-NOT deadenylation complex to P-bodies and plays a role in recruiting the complex to trigger the degradation of mRNAs involved in meiosis. Required for the maintenance of the spermatogonial stem cell population. Not essential for the assembly of P-bodies but is required for the maintenance of their normal state. In Mus musculus (Mouse), this protein is Nanos homolog 2 (Nanos2).